A 280-amino-acid chain; its full sequence is MAIRKYKPTTPGRRASSVSMFTEITRSTPEKSLLRPLSKTGGRNSHGHITTRHRGGGHKRRYRVIDFRRNDKDGVLAKVAHIEYDPNRTANIALLHYFDGEKRYILAPKGLTQGTVIESGAAADIKVGNNLPLRNIPTGTTIHNVELKPGAGAKLARSAGASIQLLGKEGSYAVLRMPSSEIRRVDIRCRATVGEVGNAEQINIRWGKAGRMRWKGWRPTVRGVVMNPVDHPHGGGEGKTSGGRHPVSPWGQKEGRTRKPKRYSDDMIVRRRRANKNKKR.

2 disordered regions span residues 29–58 (PEKS…GGGH) and 225–280 (VMNP…NKKR). A compositionally biased stretch (basic residues) spans 45–58 (SHGHITTRHRGGGH). The span at 253–269 (KEGRTRKPKRYSDDMIV) shows a compositional bias: basic and acidic residues. The segment covering 270–280 (RRRRANKNKKR) has biased composition (basic residues).

It belongs to the universal ribosomal protein uL2 family. Part of the 50S ribosomal subunit. Forms a bridge to the 30S subunit in the 70S ribosome.

In terms of biological role, one of the primary rRNA binding proteins. Required for association of the 30S and 50S subunits to form the 70S ribosome, for tRNA binding and peptide bond formation. It has been suggested to have peptidyltransferase activity; this is somewhat controversial. Makes several contacts with the 16S rRNA in the 70S ribosome. This Corynebacterium glutamicum (strain R) protein is Large ribosomal subunit protein uL2.